The following is a 219-amino-acid chain: Translation initiation factor 6 (219 aa).

Belongs to the eIF-6 family.

In terms of biological role, binds to the 50S ribosomal subunit and prevents its association with the 30S ribosomal subunit to form the 70S initiation complex. This Methanosarcina mazei (strain ATCC BAA-159 / DSM 3647 / Goe1 / Go1 / JCM 11833 / OCM 88) (Methanosarcina frisia) protein is Translation initiation factor 6.